The primary structure comprises 332 residues: Glycerol-3-phosphate dehydrogenase [NAD(P)+] (332 aa).

Trp11, Arg30, and Lys108 together coordinate NADPH. Residues Lys108, Gly137, and Ser139 each coordinate sn-glycerol 3-phosphate. Position 141 (Ala141) interacts with NADPH. Sn-glycerol 3-phosphate contacts are provided by Lys192, Asp245, Ser255, Arg256, and Asn257. Lys192 (proton acceptor) is an active-site residue. Arg256 serves as a coordination point for NADPH. Residues Val280 and Glu282 each coordinate NADPH.

Belongs to the NAD-dependent glycerol-3-phosphate dehydrogenase family.

Its subcellular location is the cytoplasm. It catalyses the reaction sn-glycerol 3-phosphate + NAD(+) = dihydroxyacetone phosphate + NADH + H(+). It carries out the reaction sn-glycerol 3-phosphate + NADP(+) = dihydroxyacetone phosphate + NADPH + H(+). The protein operates within membrane lipid metabolism; glycerophospholipid metabolism. Catalyzes the reduction of the glycolytic intermediate dihydroxyacetone phosphate (DHAP) to sn-glycerol 3-phosphate (G3P), the key precursor for phospholipid synthesis. The polypeptide is Glycerol-3-phosphate dehydrogenase [NAD(P)+] (Burkholderia orbicola (strain AU 1054)).